The primary structure comprises 469 residues: Trigger factor (469 aa).

The PPIase FKBP-type domain maps to 162-243; it reads GDFVSIDLSA…VKSVKERELP (82 aa). Residues 438 to 469 are disordered; it reads GPSGEQAAEDSAEESTDAAEGEAAEDADDTDK. Residues 444 to 469 show a composition bias toward acidic residues; that stretch reads AAEDSAEESTDAAEGEAAEDADDTDK.

This sequence belongs to the FKBP-type PPIase family. Tig subfamily.

It localises to the cytoplasm. The catalysed reaction is [protein]-peptidylproline (omega=180) = [protein]-peptidylproline (omega=0). In terms of biological role, involved in protein export. Acts as a chaperone by maintaining the newly synthesized protein in an open conformation. Functions as a peptidyl-prolyl cis-trans isomerase. This Mycolicibacterium smegmatis (strain ATCC 700084 / mc(2)155) (Mycobacterium smegmatis) protein is Trigger factor.